Reading from the N-terminus, the 546-residue chain is Probable protein kinase UbiB (546 aa).

A Protein kinase domain is found at 124–502 (DFDIQPLASA…HVRQSQSRYL (379 aa)). ATP is bound by residues 130–138 (LASASIAQV) and lysine 153. The active-site Proton acceptor is aspartate 288. The next 2 helical transmembrane spans lie at 501–521 (YLLG…VNRP) and 522–542 (EWGL…LVGW).

Belongs to the ABC1 family. UbiB subfamily.

It localises to the cell inner membrane. It participates in cofactor biosynthesis; ubiquinone biosynthesis [regulation]. Is probably a protein kinase regulator of UbiI activity which is involved in aerobic coenzyme Q (ubiquinone) biosynthesis. This chain is Probable protein kinase UbiB, found in Salmonella agona (strain SL483).